The primary structure comprises 387 residues: Pyrophosphate--fructose 6-phosphate 1-phosphotransferase 3 (387 aa).

Gly-15 serves as a coordination point for diphosphate. Asp-114 serves as a coordination point for Mg(2+). Substrate is bound by residues 140–142 (TID), 186–188 (MGR), Glu-247, and 308–311 (YELR). The active-site Proton acceptor is Asp-142.

It belongs to the phosphofructokinase type A (PFKA) family. PPi-dependent PFK group II subfamily. Clade 'Short' sub-subfamily. Homotetramer. Mg(2+) serves as cofactor.

The protein resides in the cytoplasm. The enzyme catalyses beta-D-fructose 6-phosphate + diphosphate = beta-D-fructose 1,6-bisphosphate + phosphate + H(+). It functions in the pathway carbohydrate degradation; glycolysis; D-glyceraldehyde 3-phosphate and glycerone phosphate from D-glucose: step 3/4. Non-allosteric. Catalyzes the phosphorylation of D-fructose 6-phosphate, the first committing step of glycolysis. Uses inorganic phosphate (PPi) as phosphoryl donor instead of ATP like common ATP-dependent phosphofructokinases (ATP-PFKs), which renders the reaction reversible, and can thus function both in glycolysis and gluconeogenesis. Consistently, PPi-PFK can replace the enzymes of both the forward (ATP-PFK) and reverse (fructose-bisphosphatase (FBPase)) reactions. This is Pyrophosphate--fructose 6-phosphate 1-phosphotransferase 3 (pfk3) from Trichomonas vaginalis (strain ATCC PRA-98 / G3).